The primary structure comprises 311 residues: S-adenosyl-L-methionine-dependent tRNA 4-demethylwyosine synthase (311 aa).

The [4Fe-4S] cluster site is built by cysteine 26, cysteine 39, cysteine 52, cysteine 62, cysteine 66, and cysteine 69. The 239-residue stretch at 45–283 (YGIETHRCIQ…LKLAKMLDEN (239 aa)) folds into the Radical SAM core domain.

This sequence belongs to the TYW1 family. Monomer. [4Fe-4S] cluster is required as a cofactor.

It is found in the cytoplasm. It carries out the reaction N(1)-methylguanosine(37) in tRNA(Phe) + pyruvate + S-adenosyl-L-methionine = 4-demethylwyosine(37) in tRNA(Phe) + 5'-deoxyadenosine + L-methionine + CO2 + H2O. In terms of biological role, component of the wyosine derivatives biosynthesis pathway that catalyzes the condensation of N-methylguanine with 2 carbon atoms from pyruvate to form the tricyclic 4-demethylwyosine (imG-14) on guanosine-37 of tRNA(Phe). This chain is S-adenosyl-L-methionine-dependent tRNA 4-demethylwyosine synthase, found in Methanocaldococcus jannaschii (strain ATCC 43067 / DSM 2661 / JAL-1 / JCM 10045 / NBRC 100440) (Methanococcus jannaschii).